Consider the following 147-residue polypeptide: Large ribosomal subunit protein uL13 (147 aa).

It belongs to the universal ribosomal protein uL13 family. As to quaternary structure, part of the 50S ribosomal subunit.

Functionally, this protein is one of the early assembly proteins of the 50S ribosomal subunit, although it is not seen to bind rRNA by itself. It is important during the early stages of 50S assembly. The polypeptide is Large ribosomal subunit protein uL13 (Mycobacterium marinum (strain ATCC BAA-535 / M)).